The primary structure comprises 334 residues: Protein OPG181 (334 aa).

Belongs to the orthopoxvirus OPG181 family.

This Bos taurus (Bovine) protein is Protein OPG181 (OPG181).